The following is a 959-amino-acid chain: MMS19 nucleotide excision repair protein (959 aa).

HEAT repeat units lie at residues 794–828 (QKLF…ATPQ), 832–871 (KLNI…QQDT), 874–915 (QGHL…YPTF), and 918–956 (LPHK…VGAP).

It belongs to the MET18/MMS19 family. In terms of assembly, component of the CIA complex. Interacts with Xpd and galla-2. Binds to microtubules. As to expression, expressed in embryos (at protein level).

It localises to the cytoplasm. Its subcellular location is the cytoskeleton. The protein localises to the spindle. It is found in the nucleus. The protein resides in the midbody. In terms of biological role, key component of the cytosolic iron-sulfur protein assembly (CIA) complex, a multiprotein complex that mediates the incorporation of iron-sulfur cluster into apoproteins specifically involved in DNA metabolism and genomic integrity. In the CIA complex, MMS19 acts as an adapter between early-acting CIA components and a subset of cellular target iron-sulfur proteins. Essential for diploid cell cycles, organ growth and development. Regulates mitosis by binding to Xpd and thereby competing with the Xpd-mediated repression on the Cdk-activating kinase (CAK) complex. Regulates the centrosomal localization of the MT regulator tacc, a downstream target of aurA kinase. Binds to microtubules (MT). Regulates spindle and astral MT growth, MT stability and bundling. In neuroblasts, necessary for timely and coordinated spindle assembly and orientation which is necessary for mitotic progression. In young embryos, the maternal protein is important for progression through mitosis. In Drosophila melanogaster (Fruit fly), this protein is MMS19 nucleotide excision repair protein.